We begin with the raw amino-acid sequence, 152 residues long: Transcription elongation factor Spt5 (152 aa).

One can recognise a KOW domain in the interval 99 to 129; that stretch reads EGDLVEVISGPFRGMQAQVVRVESTKNEVVL.

It belongs to the archaeal Spt5 family. In terms of assembly, heterodimer composed of Spt4 and Spt5. Interacts with RNA polymerase (RNAP).

Stimulates transcription elongation. This is Transcription elongation factor Spt5 from Sulfolobus acidocaldarius (strain ATCC 33909 / DSM 639 / JCM 8929 / NBRC 15157 / NCIMB 11770).